We begin with the raw amino-acid sequence, 172 residues long: METLHHPLVKMEDDYALSSDSEPNSSCMASTWDWKNNDERYSLSQTPSPQSLSPAVSYESPYSSSSHTQGLEEMPFSYSLLQYPSLCHGDNGDLTKKDHGHKPSMTVQRRRKASEREKLRMRAIAEALHTLRNNLPPMYSQGRQPLTKIQTLKCTINYISELTNLLQCSKRV.

Positions 1–69 are disordered; sequence METLHHPLVK…SPYSSSSHTQ (69 aa). Positions 18-29 are enriched in polar residues; that stretch reads SSDSEPNSSCMA. A compositionally biased stretch (low complexity) spans 42–66; sequence SLSQTPSPQSLSPAVSYESPYSSSS. One can recognise a bHLH domain in the interval 108 to 162; the sequence is QRRRKASEREKLRMRAIAEALHTLRNNLPPMYSQGRQPLTKIQTLKCTINYISEL.

The protein resides in the nucleus. Functionally, involved in specifying the paraxial, but not dorsal, mesoderm. May regulate the expression of T-box transcription factors required for mesoderm formation and differentiation, such as brachyury T, wnt8, vegt and eomes. The polypeptide is Mesogenin-1 (msgn1) (Xenopus tropicalis (Western clawed frog)).